Reading from the N-terminus, the 299-residue chain is GTPase Era (299 aa).

The region spanning 4–171 (KSGFVAILGR…VDILSENLDE (168 aa)) is the Era-type G domain. Residues 12-19 (GRPNVGKS) form a G1 region. 12–19 (GRPNVGKS) serves as a coordination point for GTP. Residues 38–42 (XTTRN) are G2. The interval 59–62 (DTPG) is G3. GTP is bound by residues 59 to 63 (DTPGI) and 121 to 124 (NKID). The interval 121 to 124 (NKID) is G4. A G5 region spans residues 150 to 152 (ISA). Residues 202–280 (TREEIPHSVA…FLETWVKVKK (79 aa)) form the KH type-2 domain.

This sequence belongs to the TRAFAC class TrmE-Era-EngA-EngB-Septin-like GTPase superfamily. Era GTPase family. Monomer.

It localises to the cytoplasm. It is found in the cell membrane. Its function is as follows. An essential GTPase that binds both GDP and GTP, with rapid nucleotide exchange. Plays a role in 16S rRNA processing and 30S ribosomal subunit biogenesis and possibly also in cell cycle regulation and energy metabolism. The chain is GTPase Era from Streptococcus pneumoniae serotype 19F (strain G54).